Reading from the N-terminus, the 262-residue chain is Ribosomal RNA small subunit methyltransferase A (262 aa).

Residues histidine 16, leucine 18, glycine 43, glutamate 64, aspartate 89, and asparagine 109 each coordinate S-adenosyl-L-methionine.

It belongs to the class I-like SAM-binding methyltransferase superfamily. rRNA adenine N(6)-methyltransferase family. RsmA subfamily.

It is found in the cytoplasm. The catalysed reaction is adenosine(1518)/adenosine(1519) in 16S rRNA + 4 S-adenosyl-L-methionine = N(6)-dimethyladenosine(1518)/N(6)-dimethyladenosine(1519) in 16S rRNA + 4 S-adenosyl-L-homocysteine + 4 H(+). Functionally, specifically dimethylates two adjacent adenosines (A1518 and A1519) in the loop of a conserved hairpin near the 3'-end of 16S rRNA in the 30S particle. May play a critical role in biogenesis of 30S subunits. The chain is Ribosomal RNA small subunit methyltransferase A from Xanthomonas campestris pv. campestris (strain 8004).